Reading from the N-terminus, the 420-residue chain is Calreticulin (420 aa).

The first 18 residues, 1-18, serve as a signal peptide directing secretion; the sequence is MKWGVVAVLATLVVAASA. Cysteines 106 and 140 form a disulfide. The an alpha-D-glucoside site is built by Tyr-110, Lys-112, Tyr-131, and Asp-138. 7 tandem repeats follow at residues 194-205, 213-224, 230-241, 248-259, 263-273, 277-287, and 291-301. Positions 194–259 are 4 X approximate repeats; sequence VASGSLYEDW…DAKKPEDWDD (66 aa). Over residues 210–220 the composition is skewed to basic and acidic residues; it reads TIKDPKASKPE. The disordered stretch occupies residues 210–272; that stretch reads TIKDPKASKP…GTWEPPMIPN (63 aa). Over residues 221–230 the composition is skewed to acidic residues; the sequence is DWDEREEIAD. The interval 263-301 is 3 X approximate repeats; sequence GTWEPPMIPNPEYKGEWKAKMIKNPAYKGIWVAPDIDNP. An alpha-D-glucoside is bound at residue Glu-321. Over residues 357–376 the composition is skewed to basic and acidic residues; the sequence is EEKAMFDKVKKEEDEKKAKD. A disordered region spans residues 357 to 420; it reads EEKAMFDKVK…EEEESGHDEL (64 aa). Acidic residues-rich tracts occupy residues 385–398 and 411–420; these read EAAE…EDKE and EEEESGHDEL. Residues 417-420 carry the Prevents secretion from ER motif; it reads HDEL.

Belongs to the calreticulin family.

Its subcellular location is the endoplasmic reticulum lumen. Its function is as follows. Molecular calcium-binding chaperone promoting folding, oligomeric assembly and quality control in the ER via the calreticulin/calnexin cycle. This lectin may interact transiently with almost all of the monoglucosylated glycoproteins that are synthesized in the ER. This is Calreticulin from Chlamydomonas reinhardtii (Chlamydomonas smithii).